Here is a 272-residue protein sequence, read N- to C-terminus: MQVTSRRRVTHLTAGQAIARPETLVVEEPLEIRVGGAAVTVTMRTPGSDFELAQGFLLTEGIIGAREDVHSIRYCAGCGEDGANSYNVLDVTLAAGLGRPELDVTRNFYTTSSCGVCGKASLEAVRSVSRFSPAADPATVAAATLQAMPHQLRSAQKVFDSTGGLHAAALFRADGTMLVVREDVGRHNAVDKVIGWALEQQRLPLRATVLLVSGRASFELAQKTVMAGIPVLAAVSAPSSLAVSLAEESGVTLVAFLREDSMNIYTRADRIG.

The active-site Cysteine persulfide intermediate is cysteine 114.

The protein belongs to the FdhD family.

It is found in the cytoplasm. Required for formate dehydrogenase (FDH) activity. Acts as a sulfur carrier protein that transfers sulfur from IscS to the molybdenum cofactor prior to its insertion into FDH. This is Sulfur carrier protein FdhD from Mycolicibacterium paratuberculosis (strain ATCC BAA-968 / K-10) (Mycobacterium paratuberculosis).